A 93-amino-acid chain; its full sequence is Acylphosphatase (93 aa).

Residues 7-93 enclose the Acylphosphatase-like domain; it reads CLKAVISGKV…GEFRAFEILR (87 aa). Active-site residues include Arg-22 and Asn-40.

This sequence belongs to the acylphosphatase family.

It carries out the reaction an acyl phosphate + H2O = a carboxylate + phosphate + H(+). The chain is Acylphosphatase (acyP) from Acaryochloris marina (strain MBIC 11017).